A 294-amino-acid chain; its full sequence is tRNA dimethylallyltransferase (294 aa).

Residue G11–T18 participates in ATP binding. T13 to T18 provides a ligand contact to substrate. Positions D36–Q39 are interaction with substrate tRNA.

This sequence belongs to the IPP transferase family. In terms of assembly, monomer. Requires Mg(2+) as cofactor.

It carries out the reaction adenosine(37) in tRNA + dimethylallyl diphosphate = N(6)-dimethylallyladenosine(37) in tRNA + diphosphate. Its function is as follows. Catalyzes the transfer of a dimethylallyl group onto the adenine at position 37 in tRNAs that read codons beginning with uridine, leading to the formation of N6-(dimethylallyl)adenosine (i(6)A). The protein is tRNA dimethylallyltransferase of Lactococcus lactis subsp. lactis (strain IL1403) (Streptococcus lactis).